The chain runs to 728 residues: Histone demethylase JHD2 (728 aa).

Residues 4-47 form the JmjN domain; it reads IPALYPTEQEFKNPIDYLSNPHIKRLGVRYGMVKVVPPNGFCPP. The PHD-type zinc finger occupies 235 to 285; the sequence is DDACIVCRKTNDPKRTILCDSCDKPFHIYCLSPPLERVPSGDWICNTCIVG. One can recognise a JmjC domain in the interval 381–549; the sequence is KYCDHPMNLT…YGFGAITDYK (169 aa). Fe cation is bound by residues His-427, Asp-430, and His-517.

It belongs to the JARID1 histone demethylase family. Fe(2+) serves as cofactor.

It localises to the nucleus. The enzyme catalyses N(6),N(6),N(6)-trimethyl-L-lysyl(4)-[histone H3] + 3 2-oxoglutarate + 3 O2 = L-lysyl(4)-[histone H3] + 3 formaldehyde + 3 succinate + 3 CO2. In terms of biological role, histone demethylase that demethylates 'Lys-4' of histone H3, thereby playing a central role in histone code. Demethylates trimethylated H3 'Lys-4'. In Saccharomyces cerevisiae (strain ATCC 204508 / S288c) (Baker's yeast), this protein is Histone demethylase JHD2 (JHD2).